We begin with the raw amino-acid sequence, 34 residues long: Photosystem II reaction center protein T (34 aa).

A helical transmembrane segment spans residues 3–23; it reads ALVYTFLLVGTLGIIFFAIFF.

The protein belongs to the PsbT family. As to quaternary structure, PSII is composed of 1 copy each of membrane proteins PsbA, PsbB, PsbC, PsbD, PsbE, PsbF, PsbH, PsbI, PsbJ, PsbK, PsbL, PsbM, PsbT, PsbY, PsbZ, Psb30/Ycf12, at least 3 peripheral proteins of the oxygen-evolving complex and a large number of cofactors. It forms dimeric complexes.

It is found in the plastid. The protein localises to the chloroplast thylakoid membrane. Found at the monomer-monomer interface of the photosystem II (PS II) dimer, plays a role in assembly and dimerization of PSII. PSII is a light-driven water plastoquinone oxidoreductase, using light energy to abstract electrons from H(2)O, generating a proton gradient subsequently used for ATP formation. This chain is Photosystem II reaction center protein T, found in Klebsormidium bilatum (Filamentous green alga).